The sequence spans 464 residues: ERO1-like protein alpha (464 aa).

The signal sequence occupies residues 1–23; sequence MGRGWGLLVGLLGVVWLLRSGQG. Intrachain disulfides connect C35–C48, C37–C46, C85–C387, C94–C99, C94–C130, C99–C104, C207–C237, and C390–C393. 3 positions are modified to phosphoserine: S106, S142, and S144. Positions 186, 188, and 199 each coordinate FAD. Residues S248 and H251 each contribute to the FAD site. N-linked (GlcNAc...) asparagine glycosylation occurs at N276. Residues R283 and R296 each contribute to the FAD site. The N-linked (GlcNAc...) asparagine glycan is linked to N380.

Belongs to the EROs family. In terms of assembly, predominantly monomer. May function both as a monomer and a homodimer. Interacts with PDILT. Interacts with ERP44; the interaction results in retention of ERO1A in the endoplasmic reticulum. FAD serves as cofactor. In terms of processing, N-glycosylated. Post-translationally, the Cys-94/Cys-99 and Cys-390/Cys-393 disulfide bonds constitute the redox-active center. The Cys-94/Cys-99 disulfide bond may accept electron from P4HB and funnel them to the active site disulfide Cys-390/Cys-393. The regulatory Cys-99/Cys-104 disulfide bond stabilizes the other regulatory bond Cys-94/Cys-130. Phosphorylated on Ser-144 by FAM20C in the Golgi which increases its enzymatic activity. Phosphorylation is induced by lactation. It is also induced by hypoxia and reductive stress.

It localises to the endoplasmic reticulum membrane. Its subcellular location is the golgi apparatus lumen. It is found in the secreted. The protein localises to the cell projection. The protein resides in the dendrite. With respect to regulation, enzyme activity is tightly regulated to prevent the accumulation of reactive oxygen species in the endoplasmic reticulum. Reversibly down-regulated by the formation of disulfide bonds between the active site Cys-94 and Cys-130, and between Cys-99 and Cys-104. Glutathione may be required to regulate its activity in the endoplasmic reticulum. Functionally, oxidoreductase involved in disulfide bond formation in the endoplasmic reticulum. Efficiently reoxidizes P4HB/PDI, the enzyme catalyzing protein disulfide formation, in order to allow P4HB to sustain additional rounds of disulfide formation. Following P4HB reoxidation, passes its electrons to molecular oxygen via FAD, leading to the production of reactive oxygen species (ROS) in the cell. Required for the proper folding of immunoglobulins. Plays an important role in ER stress-induced, CHOP-dependent apoptosis by activating the inositol 1,4,5-trisphosphate receptor IP3R1. This is ERO1-like protein alpha from Rattus norvegicus (Rat).